The following is a 191-amino-acid chain: Protein adenylyltransferase NmFic (191 aa).

The 126-residue stretch at 37–162 (GTTAGLQQIH…NDLELRFLLK (126 aa)) folds into the Fido domain. ATP contacts are provided by residues K67, 104–107 (NIAH), 112–118 (GNGRSTR), and 140–143 (KTLY). The Inhibitory (S/T)XXXE(G/N) motif signature appears at 182-187 (SYYYEG). An O-AMP-tyrosine; in vitro modification is found at Y183. Residue E186 participates in ATP binding.

Homodimer. Auto-AMPylation at Tyr-183 in vitro.

The catalysed reaction is L-tyrosyl-[protein] + ATP = O-(5'-adenylyl)-L-tyrosyl-[protein] + diphosphate. It catalyses the reaction L-threonyl-[protein] + ATP = 3-O-(5'-adenylyl)-L-threonyl-[protein] + diphosphate. With respect to regulation, adenylyltransferase activity is inhibited by the inhibitory helix present at the C-terminus: Glu-186 binds ATP and competes with ATP-binding at Arg-118, thereby preventing adenylyltransferase activity. Activation dissociates ATP-binding from Glu-186, allowing ordered binding of the entire ATP moiety with the alpha-phosphate in an orientation that is productive for accepting an incoming target hydroxyl side chain. Adenylyltransferase that mediates the addition of adenosine 5'-monophosphate (AMP) to specific residues of target proteins. The protein is Protein adenylyltransferase NmFic of Neisseria meningitidis serogroup B (strain ATCC BAA-335 / MC58).